The primary structure comprises 301 residues: Phosphatidylglycerol--prolipoprotein diacylglyceryl transferase (301 aa).

4 helical membrane-spanning segments follow: residues 10-30 (IAFS…LAGF), 57-77 (LLFY…MLFY), 92-112 (VWEG…AVAW), and 119-139 (MHMF…LGFG). Arginine 140 is a binding site for a 1,2-diacyl-sn-glycero-3-phospho-(1'-sn-glycerol). 3 helical membrane passes run 202–222 (PSQL…LWLF), 230–250 (YAVS…VEFV), and 264–284 (LTRG…LFWL).

Belongs to the Lgt family.

The protein resides in the cell inner membrane. It carries out the reaction L-cysteinyl-[prolipoprotein] + a 1,2-diacyl-sn-glycero-3-phospho-(1'-sn-glycerol) = an S-1,2-diacyl-sn-glyceryl-L-cysteinyl-[prolipoprotein] + sn-glycerol 1-phosphate + H(+). It functions in the pathway protein modification; lipoprotein biosynthesis (diacylglyceryl transfer). In terms of biological role, catalyzes the transfer of the diacylglyceryl group from phosphatidylglycerol to the sulfhydryl group of the N-terminal cysteine of a prolipoprotein, the first step in the formation of mature lipoproteins. The polypeptide is Phosphatidylglycerol--prolipoprotein diacylglyceryl transferase (Xylella fastidiosa (strain M23)).